Consider the following 390-residue polypeptide: Homeobox protein Meis1 (390 aa).

The MEIS N-terminal domain maps to 108–192 (GGDVCSSESF…IDLVIDDREG (85 aa)). Basic and acidic residues predominate over residues 190 to 202 (REGGSKSDSEDVT). Positions 190 to 279 (REGGSKSDSE…KKRHKKRGIF (90 aa)) are disordered. Polar residues predominate over residues 203 to 213 (RSANLTDQPSW). Residues 272–334 (RHKKRGIFPK…NARRRIVQPM (63 aa)) constitute a DNA-binding region (homeobox; TALE-type). The tract at residues 299 to 329 (YPSEEQKKQLAQDTGLTILQVNNWFINARRR) is interaction with DNA. The tract at residues 335–390 (IDQSNRAVSQGTPYNPDGQPMGGFVMDGQQHMGIRAPGPMSGMGMNMGMEGQWHYM) is required for transcriptional activation.

Belongs to the TALE/MEIS homeobox family. As to quaternary structure, interacts with the N-terminal region of PBX1 to form a heterodimer which binds DNA including a cAMP-responsive sequence in CYP17. Also forms heterodimers with PBX2. Forms heterotrimers with PBX1 or PBX2 and a number of HOX proteins including HOXA9, HOXD4 and HOXD9 where it acts as a non-DNA-binding partner. Also forms heterotrimers with PBX1 and HOX proteins including HOXD9 and HOXD10 where PBX1 is the non-DNA-binding partner. Heterodimer with DLX3. Heterodimer with HOXB13. In terms of tissue distribution, expressed at high levels in the lung with lower levels detected in the heart and brain. Expressed in pancreatic islets (beta-cells and non-beta-cells).

The protein resides in the nucleus. Functionally, acts as a transcriptional regulator of PAX6. Also acts as a transcriptional activator of PF4 in complex with PBX1 or PBX2. Required for hematopoiesis, megakaryocyte lineage development and vascular patterning. May function as a cofactor for HOXA7 and HOXA9 in the induction of myeloid leukemias. The chain is Homeobox protein Meis1 (Meis1) from Mus musculus (Mouse).